A 620-amino-acid polypeptide reads, in one-letter code: Ran-binding protein 10 (620 aa).

The segment at 1 to 38 (MAAATADPGAGNPQAGDSSGGDSGGGLPSPGEQELSRR) is disordered. Residue Ala2 is modified to N-acetylalanine. Positions 18–28 (SSGGDSGGGLP) are enriched in gly residues. The 188-residue stretch at 35-222 (LSRRLQRLYP…VDANFGQQPF (188 aa)) folds into the B30.2/SPRY domain. The region spanning 253–285 (WQAVLQNMVSSYLVHHGYCSTATAFARMTETPI) is the LisH domain. In terms of domain architecture, CTLH spans 291–348 (SIKNRQKIQKLVLEGRVGEAIETTQRFYPGLLEHNPNLLFMLKCRQFVEMVNGTDSEV). Over residues 347–398 (EVRSLSSRSPKSQDSYPGSPSLSPRHGPSSSHIHNTGADSPSCSNGVASTKN) the composition is skewed to polar residues. The interval 347 to 460 (EVRSLSSRSP…SDSEMEMEAE (114 aa)) is disordered. A Phosphoserine modification is found at Ser361. Tyr362 bears the Phosphotyrosine mark. 4 positions are modified to phosphoserine: Ser365, Ser367, Ser369, and Ser422. A compositionally biased stretch (low complexity) spans 409 to 436 (SSSSSSSSSSSSSSPSSVNYSESNSTDS). Residues 437-450 (TKSQPHSSTSNQET) are compositionally biased toward polar residues. Phosphoserine occurs at positions 451 and 453.

Belongs to the RANBP9/10 family. As to quaternary structure, may form homodimers. Identified in the CTLH complex that contains GID4, RANBP9 and/or RANBP10, MKLN1, MAEA, RMND5A (or alternatively its paralog RMND5B), GID8, ARMC8, WDR26 and YPEL5. Within this complex, MAEA, RMND5A (or alternatively its paralog RMND5B), GID8, WDR26, and RANBP9 and/or RANBP10 form the catalytic core, while GID4, MKLN1, ARMC8 and YPEL5 have ancillary roles. Interacts with RAN and RANBP9. Interacts with the HGF receptor MET. Interacts with AR. Interacts with TUBB1. Interacts with YPEL5. May interact with TUBB5. Interacts with DDX4. In terms of tissue distribution, expressed at highest levels in spleen and liver. Expressed in megakaryocytes and platelets (at protein level).

The protein localises to the cytoplasm. The protein resides in the nucleus. Functionally, may act as an adapter protein to couple membrane receptors to intracellular signaling pathways. Core component of the CTLH E3 ubiquitin-protein ligase complex that selectively accepts ubiquitin from UBE2H and mediates ubiquitination and subsequent proteasomal degradation of the transcription factor HBP1. Enhances dihydrotestosterone-induced transactivation activity of AR, as well as dexamethasone-induced transactivation activity of NR3C1, but does not affect estrogen-induced transactivation. Acts as a guanine nucleotide exchange factor (GEF) for RAN GTPase. May play an essential role in hemostasis and in maintaining microtubule dynamics with respect to both platelet shape and function. This chain is Ran-binding protein 10 (Ranbp10), found in Mus musculus (Mouse).